Here is a 480-residue protein sequence, read N- to C-terminus: Reticulophagy regulator 1 (480 aa).

The span at 1 to 10 (MASPAPEEHA) shows a compositional bias: basic and acidic residues. Residues 1-41 (MASPAPEEHATQGCPATEEQEPRPGVPGEEAGPEGAGPQVE) are disordered. Topologically, residues 1 to 43 (MASPAPEEHATQGCPATEEQEPRPGVPGEEAGPEGAGPQVEEA) are cytoplasmic. The helical transmembrane segment at 44–64 (AGRVAAALTWLLGEPVLWLGW) threads the bilayer. The Lumenal segment spans residues 65–78 (RADELLSWKRPLRS). Residues 67–216 (DELLSWKRPL…LLFAFLCPLF (150 aa)) are reticulon homology domain. The helical transmembrane segment at 79 to 99 (LLAFLGANLLFWFLALTPWRV) threads the bilayer. Residues 100 to 101 (YH) are Cytoplasmic-facing. The helical transmembrane segment at 102–122 (LISVMILGRVIMQIIKDMVLS) threads the bilayer. At 123–191 (RARGAQLWRS…LVCSVCTFFT (69 aa)) the chain is on the lumenal side. Ser132 is subject to Phosphoserine. Ser134 is subject to Phosphoserine; by CAMK2B. At Ser136 the chain carries Phosphoserine. A helical transmembrane segment spans residues 192–212 (ILGSYIPGVILSYLLLLFAFL). Residues 213-480 (CPLFKCNDIG…GFLSNLLGGH (268 aa)) are Cytoplasmic-facing. Polar residues predominate over residues 302-313 (FNLSEGYTPQTD). Residues 302-348 (FNLSEGYTPQTDTSDDLDRPSEEVFSRDLSDFPSLENGAGTNDEDEL) form a disordered region. Residues 317-331 (DLDRPSEEVFSRDLS) show a composition bias toward basic and acidic residues. Positions 436–441 (DDFELL) match the LIR motif motif. The tract at residues 450–480 (ESELGLTQDQGAEAQQSKKSSGFLSNLLGGH) is disordered. A compositionally biased stretch (polar residues) spans 454–473 (GLTQDQGAEAQQSKKSSGFL).

It belongs to the RETREG family. In terms of assembly, homooligomer; oligomerization is enhanced following endoplasmic reticulum stress and is mediated by the reticulon homology domain. Interacts with ATG8 family modifier proteins MAP1LC3A, MAP1LC3B, GABARAP, GABARAPL1 and GABARAPL2. Phosphorylation at Ser-134 by CAMK2B enhances oligomerization and membrane scission and reticulophagy activity.

It localises to the golgi apparatus. The protein localises to the cis-Golgi network membrane. The protein resides in the endoplasmic reticulum membrane. Its function is as follows. Endoplasmic reticulum (ER)-anchored autophagy regulator which mediates ER delivery into lysosomes through sequestration into autophagosomes. Promotes membrane remodeling and ER scission via its membrane bending capacity and targets the fragments into autophagosomes via interaction with ATG8 family proteins. Active under basal conditions. Required for collagen quality control in a LIR motif-dependent manner. Required for long-term survival of nociceptive and autonomic ganglion neurons. In Rattus norvegicus (Rat), this protein is Reticulophagy regulator 1.